The primary structure comprises 618 residues: DNA mismatch repair protein MutL (618 aa).

The segment at 367-402 is disordered; sequence EPTTAREPATPRYSGGASGGNGGRQTAGGWPHAQPG. The segment covering 382-392 has biased composition (gly residues); sequence GASGGNGGRQT.

This sequence belongs to the DNA mismatch repair MutL/HexB family.

In terms of biological role, this protein is involved in the repair of mismatches in DNA. It is required for dam-dependent methyl-directed DNA mismatch repair. May act as a 'molecular matchmaker', a protein that promotes the formation of a stable complex between two or more DNA-binding proteins in an ATP-dependent manner without itself being part of a final effector complex. In Salmonella paratyphi A (strain ATCC 9150 / SARB42), this protein is DNA mismatch repair protein MutL.